A 73-amino-acid chain; its full sequence is Large ribosomal subunit protein uL24 (73 aa).

A compositionally biased stretch (basic and acidic residues) spans 51 to 65; it reads DDNPKGGFIHKEKPM. Residues 51–73 form a disordered region; sequence DDNPKGGFIHKEKPMHISNVKKA.

It belongs to the universal ribosomal protein uL24 family. As to quaternary structure, part of the 50S ribosomal subunit.

In terms of biological role, one of two assembly initiator proteins, it binds directly to the 5'-end of the 23S rRNA, where it nucleates assembly of the 50S subunit. One of the proteins that surrounds the polypeptide exit tunnel on the outside of the subunit. This Helicobacter acinonychis (strain Sheeba) protein is Large ribosomal subunit protein uL24.